We begin with the raw amino-acid sequence, 276 residues long: Chymotrypsin (276 aa).

A signal peptide spans 1-16 (MKVALVVLALFGVSLA). A propeptide spans 17–45 (ASIDNIEIPPSKNIYVEPINQPEVDPSLE) (activation peptide). The Peptidase S1 domain maps to 46–272 (IVNGQEVVPH…YLNWLQTHSE (227 aa)). Residues Cys74 and Cys90 are joined by a disulfide bond. Active-site charge relay system residues include His89 and Asp135. 2 N-linked (GlcNAc...) asparagine glycosylation sites follow: Asn144 and Asn193. 2 cysteine pairs are disulfide-bonded: Cys202-Cys215 and Cys225-Cys250. The active-site Charge relay system is Ser229.

This sequence belongs to the peptidase S1 family. In terms of tissue distribution, expressed in larval carcasses and gut, and adult gut.

It is found in the secreted. The protein resides in the extracellular space. It catalyses the reaction Preferential cleavage: Tyr-|-Xaa, Trp-|-Xaa, Phe-|-Xaa, Leu-|-Xaa.. Serine protease with chymotryptic and collagenolytic activities. The polypeptide is Chymotrypsin (Phaedon cochleariae (Mustard beetle)).